Reading from the N-terminus, the 71-residue chain is UPF0346 protein SUB0487 (71 aa).

The protein belongs to the UPF0346 family.

In Streptococcus uberis (strain ATCC BAA-854 / 0140J), this protein is UPF0346 protein SUB0487.